The primary structure comprises 557 residues: ADP-ribosylation factor-binding protein GGA1 (557 aa).

The VHS domain occupies 29 to 165 (ACRSTLPEPD…LLKYKGYTFP (137 aa)). The region spanning 192-317 (ERAQAAKLEE…LLKRYKSIKG (126 aa)) is the GAT domain. A Phosphothreonine modification is found at threonine 348. Phosphoserine occurs at positions 353, 357, 378, and 394. In terms of domain architecture, GAE spans 440-556 (AQSQRHILNQ…EESGTTSLPT (117 aa)).

Binds to ARF1 and ARF2.

The protein resides in the golgi apparatus. The protein localises to the trans-Golgi network. May play a role in the regulation of membrane traffic through the trans-Golgi network. This chain is ADP-ribosylation factor-binding protein GGA1 (GGA1), found in Saccharomyces cerevisiae (strain ATCC 204508 / S288c) (Baker's yeast).